Here is a 252-residue protein sequence, read N- to C-terminus: Protein TRANSPARENT TESTA 16 (252 aa).

The 61-residue stretch at 1 to 61 (MGRGKIEIKK…GKLSEFCSEQ (61 aa)) folds into the MADS-box domain. In terms of domain architecture, K-box spans 86-176 (QEQLHHEMEL…YRWLHEHRAA (91 aa)). Residues 121-174 (NELDGLERQLEHSVLKVRERKNELMQQQLENLSRKRRMLEEDNNNMYRWLHEHR) are a coiled coil.

As to quaternary structure, interacts with AP1/AGL7, SEP1/AGL2, SEP2/AGL4, SEP3/AGL9 and AGL3/SEP4. Expressed in buds, flowers and immature seeds, but not in roots, stems, leaves, seedlings or siliques valves. Expression in seed coat is confined to the endothelium layer.

It localises to the nucleus. Its function is as follows. Transcription factor involved in the developmental regulation of the endothelium and in the accumulation of proanthocyanidins (PAs) or condensed tannins which give the seed its brown pigmentation after oxidation. Necessary for the normal activation of the BANYULS promoter in the endothelium body. Is required, together with AGL11/STK for the maternal control of endothelium formation, which is essential for female gametophyte development and fertilization, and seed formation. Interacts genetically with AGL1/SHP1 and AGL5/SHP2 in a partially antagonistic manner and represses AGL1/SHP1, AGL5/SHP2, and AGL8/FUL during flower development. Is essential for the coordination of cell divisions in ovule, seed coat development and endosperm formation. Mediates the crosstalk between endothelium and nucellus to ensure proper seed formation. Functions redundantly with AGL63/GOA to repress nucellus growth and promote its degeneration. Represses the negative regulator of autophagy and programmed cell death HVA22D in the proximal nucellus. Binds specifically to the CArG box DNA sequence 5'-CC (A/T)6 GG-3'. The protein is Protein TRANSPARENT TESTA 16 (TT16) of Arabidopsis thaliana (Mouse-ear cress).